The primary structure comprises 485 residues: tRNA sulfurtransferase (485 aa).

A THUMP domain is found at 61–165; sequence EELIALLQRI…DDKMMLVKAR (105 aa). ATP is bound by residues 183 to 184, Lys265, Gly287, and Gln296; that span reads LI. A disulfide bridge links Cys344 with Cys456. Residues 404–483 enclose the Rhodanese domain; it reads LSENEVILDI…FSNVRVFAKK (80 aa). Residue Cys456 is the Cysteine persulfide intermediate of the active site.

It belongs to the ThiI family.

The protein localises to the cytoplasm. The enzyme catalyses [ThiI sulfur-carrier protein]-S-sulfanyl-L-cysteine + a uridine in tRNA + 2 reduced [2Fe-2S]-[ferredoxin] + ATP + H(+) = [ThiI sulfur-carrier protein]-L-cysteine + a 4-thiouridine in tRNA + 2 oxidized [2Fe-2S]-[ferredoxin] + AMP + diphosphate. It carries out the reaction [ThiS sulfur-carrier protein]-C-terminal Gly-Gly-AMP + S-sulfanyl-L-cysteinyl-[cysteine desulfurase] + AH2 = [ThiS sulfur-carrier protein]-C-terminal-Gly-aminoethanethioate + L-cysteinyl-[cysteine desulfurase] + A + AMP + 2 H(+). The protein operates within cofactor biosynthesis; thiamine diphosphate biosynthesis. Its function is as follows. Catalyzes the ATP-dependent transfer of a sulfur to tRNA to produce 4-thiouridine in position 8 of tRNAs, which functions as a near-UV photosensor. Also catalyzes the transfer of sulfur to the sulfur carrier protein ThiS, forming ThiS-thiocarboxylate. This is a step in the synthesis of thiazole, in the thiamine biosynthesis pathway. The sulfur is donated as persulfide by IscS. This chain is tRNA sulfurtransferase, found in Haemophilus influenzae (strain PittEE).